The sequence spans 276 residues: Undecaprenyl-diphosphatase 1 (276 aa).

The next 5 membrane-spanning stretches (helical) occupy residues 85–105, 108–128, 187–207, 217–237, and 253–273; these read MNVVIATLPAIALALLFEKTI, VLFAPVPVAVALVVGGAVILW, VATEFSFFLAIPVIFGATLYE, VDSIGLFAIGLAAAFVSAFAC, and FAWYRIVFGLFVLLVGYSGWI.

The protein belongs to the UppP family.

Its subcellular location is the cell inner membrane. The catalysed reaction is di-trans,octa-cis-undecaprenyl diphosphate + H2O = di-trans,octa-cis-undecaprenyl phosphate + phosphate + H(+). Its function is as follows. Catalyzes the dephosphorylation of undecaprenyl diphosphate (UPP). Confers resistance to bacitracin. The chain is Undecaprenyl-diphosphatase 1 from Burkholderia thailandensis (strain ATCC 700388 / DSM 13276 / CCUG 48851 / CIP 106301 / E264).